The chain runs to 295 residues: Nicotinate-nucleotide pyrophosphorylase [carboxylating] (295 aa).

Substrate contacts are provided by residues R107, 142–144, R166, K176, E206, D227, and 256–258; these read TRK and SGG.

This sequence belongs to the NadC/ModD family. As to quaternary structure, hexamer formed by 3 homodimers.

The protein resides in the cytoplasm. The protein localises to the nucleus. It catalyses the reaction nicotinate beta-D-ribonucleotide + CO2 + diphosphate = quinolinate + 5-phospho-alpha-D-ribose 1-diphosphate + 2 H(+). It functions in the pathway cofactor biosynthesis; NAD(+) biosynthesis; nicotinate D-ribonucleotide from quinolinate: step 1/1. Its function is as follows. Involved in the catabolism of quinolinic acid (QA). The protein is Nicotinate-nucleotide pyrophosphorylase [carboxylating] (BNA6) of Saccharomyces cerevisiae (strain ATCC 204508 / S288c) (Baker's yeast).